The chain runs to 148 residues: Transcriptional regulator MraZ (148 aa).

SpoVT-AbrB domains lie at 5 to 51 (STQL…PQPV) and 80 to 123 (ASDV…DMAK).

This sequence belongs to the MraZ family. In terms of assembly, forms oligomers.

Its subcellular location is the cytoplasm. It is found in the nucleoid. This Nitrosomonas europaea (strain ATCC 19718 / CIP 103999 / KCTC 2705 / NBRC 14298) protein is Transcriptional regulator MraZ.